A 1030-amino-acid chain; its full sequence is LPS-assembly protein LptD (1030 aa).

The N-terminal stretch at 1-32 (MEGPPTAAHAAAPLRTAVFLALAASWQQPAVA) is a signal peptide. The disordered stretch occupies residues 50–213 (VAKRKDGGAD…APAGWTCKPQ (164 aa)). The segment covering 78-91 (LSQSNRAAPSTAVS) has biased composition (polar residues). The span at 126–137 (TEDEEDEESESA) shows a compositional bias: acidic residues. Positions 161 to 171 (GTPPARAPRPE) are enriched in pro residues.

Belongs to the LptD family. As to quaternary structure, component of the lipopolysaccharide transport and assembly complex. Interacts with LptE and LptA.

The protein localises to the cell outer membrane. Functionally, together with LptE, is involved in the assembly of lipopolysaccharide (LPS) at the surface of the outer membrane. The polypeptide is LPS-assembly protein LptD (Methylococcus capsulatus (strain ATCC 33009 / NCIMB 11132 / Bath)).